We begin with the raw amino-acid sequence, 95 residues long: Small ribosomal subunit protein uS14 (95 aa).

This sequence belongs to the universal ribosomal protein uS14 family. Part of the 30S ribosomal subunit. Contacts proteins S3 and S10.

Functionally, binds 16S rRNA, required for the assembly of 30S particles and may also be responsible for determining the conformation of the 16S rRNA at the A site. The chain is Small ribosomal subunit protein uS14 (rpsN) from Carsonella ruddii.